Consider the following 85-residue polypeptide: Large ribosomal subunit protein bL27 (85 aa).

The tract at residues 1–22 (MAHKKAGGSTNNGRDSESKRLG) is disordered.

It belongs to the bacterial ribosomal protein bL27 family.

This Vibrio atlanticus (strain LGP32) (Vibrio splendidus (strain Mel32)) protein is Large ribosomal subunit protein bL27.